A 559-amino-acid polypeptide reads, in one-letter code: Oxygen-dependent choline dehydrogenase (559 aa).

FAD is bound at residue 4–33 (DYIIIGAGSAGNVLATRLTEESDVSVLLLE). The segment at 182–201 (EGFGPMDRTVTPKGRRASTA) is disordered. The active-site Proton acceptor is the His-471.

The protein belongs to the GMC oxidoreductase family. FAD serves as cofactor.

It catalyses the reaction choline + A = betaine aldehyde + AH2. The catalysed reaction is betaine aldehyde + NAD(+) + H2O = glycine betaine + NADH + 2 H(+). It participates in amine and polyamine biosynthesis; betaine biosynthesis via choline pathway; betaine aldehyde from choline (cytochrome c reductase route): step 1/1. Its function is as follows. Involved in the biosynthesis of the osmoprotectant glycine betaine. Catalyzes the oxidation of choline to betaine aldehyde and betaine aldehyde to glycine betaine at the same rate. The protein is Oxygen-dependent choline dehydrogenase of Pectobacterium carotovorum subsp. carotovorum (strain PC1).